Consider the following 147-residue polypeptide: Cyanate hydratase (147 aa).

Catalysis depends on residues Arg-88, Glu-91, and Ser-114.

It belongs to the cyanase family.

The catalysed reaction is cyanate + hydrogencarbonate + 3 H(+) = NH4(+) + 2 CO2. Catalyzes the reaction of cyanate with bicarbonate to produce ammonia and carbon dioxide. The protein is Cyanate hydratase of Methylobacillus flagellatus (strain ATCC 51484 / DSM 6875 / VKM B-1610 / KT).